We begin with the raw amino-acid sequence, 320 residues long: MEEVPHDCPGADSAQAGRGASCQGCPNQRLCASGAGAAADPAIEEIKEKMKTVKHKILVLSGKGGVGKSTFSAHLAHGLAEDENTQVALLDIDICGPSIPKIMGLEGEQVHQSGSGWSPVFLEDNLGVMSVGFLLSSPDDAVIWRGPKKNGMIKQFLRDVDWGEVDYLIVDTPPGTSDEHLSVVQYLTAAHIDGAVIITTPQEVSLQDVRKEISFCHKVKLPIIGVVENMSGFICPKCQKESQIFPPTTGGAEAMCQDLKIPLLGKVPLDPRIGKSCDKGQSFLVEAPDSPATVAYRSIIQRIQEFCSQRLPEGENLVGS.

An N-acetylmethionine modification is found at M1. C8, C22, C25, and C31 together coordinate [4Fe-4S] cluster. Position 62–69 (62–69 (GKGGVGKS)) interacts with ATP. Residues C235 and C238 each contribute to the [4Fe-4S] cluster site.

It belongs to the Mrp/NBP35 ATP-binding proteins family. NUBP1/NBP35 subfamily. Heterotetramer of 2 NUBP1 and 2 NUBP2 chains. Interacts with KIFC1. Interacts with the BBS/CCT complex subunit CCT1. It depends on [4Fe-4S] cluster as a cofactor.

The protein resides in the cytoplasm. It localises to the nucleus. The protein localises to the cell projection. It is found in the cytoskeleton. Its subcellular location is the cilium axoneme. The protein resides in the cilium basal body. It localises to the microtubule organizing center. The protein localises to the centrosome. It is found in the centriole. Functionally, component of the cytosolic iron-sulfur (Fe/S) protein assembly (CIA) machinery. Required for maturation of extramitochondrial Fe-S proteins. The NUBP1-NUBP2 heterotetramer forms a Fe-S scaffold complex, mediating the de novo assembly of an Fe-S cluster and its transfer to target apoproteins. Implicated in the regulation of centrosome duplication. Negatively regulates cilium formation and structure. This is Cytosolic Fe-S cluster assembly factor NUBP1 from Bos taurus (Bovine).